A 56-amino-acid chain; its full sequence is MAKKGVREKIRLVSSAGTGHFYTTDKNKRNMPGKFEIKKFDPVVRQHVMYKEAKIK.

This sequence belongs to the bacterial ribosomal protein bL33 family.

The protein is Large ribosomal subunit protein bL33 of Vibrio campbellii (strain ATCC BAA-1116).